A 105-amino-acid polypeptide reads, in one-letter code: Large ribosomal subunit protein uL24 (105 aa).

The protein belongs to the universal ribosomal protein uL24 family. As to quaternary structure, part of the 50S ribosomal subunit.

Functionally, one of two assembly initiator proteins, it binds directly to the 5'-end of the 23S rRNA, where it nucleates assembly of the 50S subunit. One of the proteins that surrounds the polypeptide exit tunnel on the outside of the subunit. The chain is Large ribosomal subunit protein uL24 from Psychrobacter sp. (strain PRwf-1).